Reading from the N-terminus, the 84-residue chain is Translation initiation factor IF-1, chloroplastic (84 aa).

Residues 1 to 72 enclose the S1-like domain; the sequence is MKKQNLVEME…SKGRITYRLR (72 aa).

This sequence belongs to the IF-1 family. Component of the 30S ribosomal translation pre-initiation complex which assembles on the 30S ribosome in the order IF-2 and IF-3, IF-1 and N-formylmethionyl-tRNA(fMet); mRNA recruitment can occur at any time during PIC assembly.

The protein localises to the plastid. Its subcellular location is the chloroplast. In terms of biological role, one of the essential components for the initiation of protein synthesis. Stabilizes the binding of IF-2 and IF-3 on the 30S subunit to which N-formylmethionyl-tRNA(fMet) subsequently binds. Helps modulate mRNA selection, yielding the 30S pre-initiation complex (PIC). Upon addition of the 50S ribosomal subunit IF-1, IF-2 and IF-3 are released leaving the mature 70S translation initiation complex. The sequence is that of Translation initiation factor IF-1, chloroplastic from Spirogyra maxima (Green alga).